Reading from the N-terminus, the 535-residue chain is Succinate-semialdehyde dehydrogenase, mitochondrial (535 aa).

Residues 1–47 (MATCFWLRSCGARRLGSTFPGCRLRPRAGGLVPASGPAPGPAQLRCY) constitute a mitochondrion transit peptide. Lys126 is modified (N6-acetyllysine; alternate). An N6-succinyllysine; alternate modification is found at Lys126. 2 positions are modified to N6-succinyllysine: Lys135 and Lys184. NAD(+) contacts are provided by residues Arg213 and 228–231 (KPAE). A substrate-binding site is contributed by Arg213. At Lys265 the chain carries N6-acetyllysine; alternate. Position 265 is an N6-succinyllysine; alternate (Lys265). 284 to 289 (GSTTTG) provides a ligand contact to NAD(+). The active-site Proton acceptor is Glu306. Arg334 is a substrate binding site. Cys340 acts as the Nucleophile in catalysis. Cys340 and Cys342 form a disulfide bridge. At Lys365 the chain carries N6-acetyllysine. Position 402 is an N6-succinyllysine (Lys402). Lys411 carries the N6-acetyllysine modification. Ser498 serves as a coordination point for substrate. Ser499 is subject to Phosphoserine.

This sequence belongs to the aldehyde dehydrogenase family. As to quaternary structure, homotetramer.

It localises to the mitochondrion. The catalysed reaction is succinate semialdehyde + NAD(+) + H2O = succinate + NADH + 2 H(+). It functions in the pathway amino-acid degradation; 4-aminobutanoate degradation. Its activity is regulated as follows. Redox-regulated. Inhibited under oxydizing conditions. Functionally, catalyzes one step in the degradation of the inhibitory neurotransmitter gamma-aminobutyric acid (GABA). The protein is Succinate-semialdehyde dehydrogenase, mitochondrial (ALDH5A1) of Hylobates lar (Lar gibbon).